Here is a 435-residue protein sequence, read N- to C-terminus: MSKNVVVIGTQWGDEGKGKIVDWLTDQAQGVVRFQGGHNAGHTLVIGGKQTVLHLIPSGILRKDVACYIGNGVVVSPQALLDEVGMLERAGIDVLSRLRISEACPLILPCHVALDNAREIARGLGKIGTTGRGIGPAYEDKVARRAVRLQDLFHRDRFAAKLGEILDYHNFVLKNYFQSPVVDFQQTMDETLSLVERIRPMVADVPRLLFEANRAGANLLFEGAQGALLDIDHGTYPFVTSSNCIAGAATTGSGIGPQMLHYVLGITKAYTTRVGAGPFPTELDDDVGRHLAKRGNEFGATTGRPRRCGWFDAAALKRSIQINGVSGLCVTKLDVMDGVETLRLGVGYKMMGKGEEEKFSAIMPVGAEELASCEPVYEEMPGWSGSTVGIRNFEQLPMAARNYLKRMEEVCEVSIDMISTGPDREETIVLRHPFE.

Residues 13-19 (GDEGKGK) and 41-43 (GHT) each bind GTP. Aspartate 14 functions as the Proton acceptor in the catalytic mechanism. Mg(2+) is bound by residues aspartate 14 and glycine 41. IMP-binding positions include 14–17 (DEGK), 39–42 (NAGH), threonine 130, arginine 144, glutamine 225, threonine 240, and arginine 304. Histidine 42 functions as the Proton donor in the catalytic mechanism. 300–306 (ATTGRPR) is a substrate binding site. Residues arginine 306, 332–334 (KLD), and 419–421 (STG) each bind GTP.

It belongs to the adenylosuccinate synthetase family. As to quaternary structure, homodimer. Mg(2+) serves as cofactor.

The protein resides in the cytoplasm. It catalyses the reaction IMP + L-aspartate + GTP = N(6)-(1,2-dicarboxyethyl)-AMP + GDP + phosphate + 2 H(+). The protein operates within purine metabolism; AMP biosynthesis via de novo pathway; AMP from IMP: step 1/2. In terms of biological role, plays an important role in the de novo pathway of purine nucleotide biosynthesis. Catalyzes the first committed step in the biosynthesis of AMP from IMP. The polypeptide is Adenylosuccinate synthetase (Nitrosospira multiformis (strain ATCC 25196 / NCIMB 11849 / C 71)).